A 181-amino-acid chain; its full sequence is Oligoribonuclease (181 aa).

The 164-residue stretch at 8–171 (LVWIDMEMTG…DDIRESIAEL (164 aa)) folds into the Exonuclease domain. Tyr-129 is an active-site residue.

It belongs to the oligoribonuclease family.

It localises to the cytoplasm. 3'-to-5' exoribonuclease specific for small oligoribonucleotides. The chain is Oligoribonuclease from Pseudoalteromonas atlantica (strain T6c / ATCC BAA-1087).